The following is a 637-amino-acid chain: Poly(A) polymerase beta (637 aa).

The span at 1 to 10 shows a compositional bias: low complexity; that stretch reads MMPFPVTTQG. Positions 1 to 23 are disordered; it reads MMPFPVTTQGPPQPAPPPNRYGV. ATP is bound by residues 101-103, threonine 110, 114-116, aspartate 168, lysine 229, tyrosine 238, and 247-248; these read FGS, DID, and GV. Aspartate 114, aspartate 116, and aspartate 168 together coordinate Mg(2+). The tract at residues 535 to 555 is disordered; that stretch reads SVPSSTSTMKTGPLISSSQGR.

The protein belongs to the poly(A) polymerase family. Interacts with GSG1. Mg(2+) is required as a cofactor. The cofactor is Mn(2+). As to expression, testis specific.

Its subcellular location is the nucleus. The catalysed reaction is RNA(n) + ATP = RNA(n)-3'-adenine ribonucleotide + diphosphate. This chain is Poly(A) polymerase beta, found in Homo sapiens (Human).